Here is a 130-residue protein sequence, read N- to C-terminus: Type VII secretion system extracellular protein C (130 aa).

It belongs to the EsxC family. As to quaternary structure, forms both homodimers and heterodimers with EsxA. Homodimerization is calcium-dependent.

It is found in the secreted. In Staphylococcus aureus (strain USA300), this protein is Type VII secretion system extracellular protein C.